Here is a 232-residue protein sequence, read N- to C-terminus: GFP-like non-fluorescent chromoprotein FP595 (232 aa).

Residues 63–65 (MYG) constitute a cross-link (2-iminomethyl-5-imidazolinone (Met-Gly)). Tyr64 is modified ((E)-2,3-didehydrotyrosine).

Belongs to the GFP family. Contains a chromophore consisting of modified amino acid residues. The chromophore is formed by autocatalytic backbone condensation between Xaa-N and Gly-(N+2), oxidation of Tyr-(N+1) to didehydrotyrosine, and formation of a double bond to the alpha-amino nitrogen of residue Tyr-(N+1). Maturation of the chromophore requires nothing other than molecular oxygen. As to expression, tentacle tips.

In terms of biological role, pigment protein that is intensely purple in color. The protein is GFP-like non-fluorescent chromoprotein FP595 of Anemonia sulcata (Mediterranean snakelocks sea anemone).